A 429-amino-acid polypeptide reads, in one-letter code: Phosphomethylpyrimidine synthase (429 aa).

Substrate contacts are provided by residues Asn-66, Met-95, Tyr-124, His-163, 185 to 187 (SRG), 226 to 229 (DGLR), and Glu-265. His-269 is a Zn(2+) binding site. Tyr-292 serves as a coordination point for substrate. His-333 contributes to the Zn(2+) binding site. Cys-407, Cys-410, and Cys-414 together coordinate [4Fe-4S] cluster.

The protein belongs to the ThiC family. The cofactor is [4Fe-4S] cluster.

The catalysed reaction is 5-amino-1-(5-phospho-beta-D-ribosyl)imidazole + S-adenosyl-L-methionine = 4-amino-2-methyl-5-(phosphooxymethyl)pyrimidine + CO + 5'-deoxyadenosine + formate + L-methionine + 3 H(+). It functions in the pathway cofactor biosynthesis; thiamine diphosphate biosynthesis. In terms of biological role, catalyzes the synthesis of the hydroxymethylpyrimidine phosphate (HMP-P) moiety of thiamine from aminoimidazole ribotide (AIR) in a radical S-adenosyl-L-methionine (SAM)-dependent reaction. The protein is Phosphomethylpyrimidine synthase of Pyrococcus abyssi (strain GE5 / Orsay).